The primary structure comprises 125 residues: Small ribosomal subunit protein uS12c (125 aa).

The interval 1-23 (MPTLEHLTRSPRKKIKRKTKSPA) is disordered. Basic residues predominate over residues 9-20 (RSPRKKIKRKTK).

It belongs to the universal ribosomal protein uS12 family. In terms of assembly, part of the 30S ribosomal subunit.

It localises to the plastid. It is found in the chloroplast. Functionally, with S4 and S5 plays an important role in translational accuracy. Located at the interface of the 30S and 50S subunits. The protein is Small ribosomal subunit protein uS12c (rps12) of Euglena gracilis.